The sequence spans 149 residues: Oligosaccharyltransferase complex subunit ostc-A (149 aa).

The Cytoplasmic portion of the chain corresponds to 1–32 (MESLYRVPFTVLECPNLKLKKPSWLHMPSAMT). A helical transmembrane segment spans residues 33–53 (VYAMVVVSYFLITGGIIYDVI). Topologically, residues 54 to 83 (VEPPSVGSMTDEHGHQRPVAFLAYRVNGQY) are extracellular. A helical transmembrane segment spans residues 84-104 (IMEGLASSFLFTMGGLGFIIL). The Cytoplasmic portion of the chain corresponds to 105 to 117 (DRSNTPNIPKLNR). Residues 118 to 138 (FLLLFIGFVCVLLSFFMARVF) traverse the membrane as a helical segment. Residues 139-149 (MRMKLPGYLMG) lie on the Extracellular side of the membrane.

It belongs to the OSTC family. As to quaternary structure, specific component of the STT3A-containing form of the oligosaccharyltransferase (OST) complex.

Its subcellular location is the membrane. Its pathway is protein modification; protein glycosylation. Its function is as follows. Specific component of the STT3A-containing form of the oligosaccharyl transferase (OST) complex that catalyzes the initial transfer of a defined glycan (Glc(3)Man(9)GlcNAc(2) in eukaryotes) from the lipid carrier dolichol-pyrophosphate to an asparagine residue within an Asn-X-Ser/Thr consensus motif in nascent polypeptide chains, the first step in protein N-glycosylation. N-glycosylation occurs cotranslationally and the complex associates with the Sec61 complex at the channel-forming translocon complex that mediates protein translocation across the endoplasmic reticulum (ER). All subunits are required for a maximal enzyme activity. The chain is Oligosaccharyltransferase complex subunit ostc-A from Xenopus laevis (African clawed frog).